Reading from the N-terminus, the 225-residue chain is E3 ubiquitin-protein ligase ATL76 (225 aa).

A helical membrane pass occupies residues 59–79 (LMLLSVLICGIICCLGLHYII). An RING-type; atypical zinc finger spans residues 135–177 (CVICLSDFVSGEQLRLLPKCNHGFHVRCIDKWLQHHLTCPKCR).

This sequence belongs to the RING-type zinc finger family. ATL subfamily.

It localises to the membrane. The catalysed reaction is S-ubiquitinyl-[E2 ubiquitin-conjugating enzyme]-L-cysteine + [acceptor protein]-L-lysine = [E2 ubiquitin-conjugating enzyme]-L-cysteine + N(6)-ubiquitinyl-[acceptor protein]-L-lysine.. The protein operates within protein modification; protein ubiquitination. Functionally, E3 ubiquitin-protein ligase able to catalyze polyubiquitination with ubiquitin-conjugating enzyme E2 UBC8 in vitro. The polypeptide is E3 ubiquitin-protein ligase ATL76 (ATL76) (Arabidopsis thaliana (Mouse-ear cress)).